Here is a 59-residue protein sequence, read N- to C-terminus: Photosystem II reaction center protein K (59 aa).

The propeptide occupies 1–22 (MLNIFSLICLNSDLYSSRFFLA). Residues 38–58 (MPVIPLFFLLLAFVWQAAVSF) form a helical membrane-spanning segment.

This sequence belongs to the PsbK family. In terms of assembly, PSII is composed of 1 copy each of membrane proteins PsbA, PsbB, PsbC, PsbD, PsbE, PsbF, PsbH, PsbI, PsbJ, PsbK, PsbL, PsbM, PsbT, PsbX, PsbY, PsbZ, Psb30/Ycf12, at least 3 peripheral proteins of the oxygen-evolving complex and a large number of cofactors. It forms dimeric complexes.

The protein resides in the plastid. It localises to the chloroplast thylakoid membrane. Functionally, one of the components of the core complex of photosystem II (PSII). PSII is a light-driven water:plastoquinone oxidoreductase that uses light energy to abstract electrons from H(2)O, generating O(2) and a proton gradient subsequently used for ATP formation. It consists of a core antenna complex that captures photons, and an electron transfer chain that converts photonic excitation into a charge separation. In Oenothera elata subsp. hookeri (Hooker's evening primrose), this protein is Photosystem II reaction center protein K.